A 277-amino-acid chain; its full sequence is Large ribosomal subunit protein uL2 (277 aa).

Disordered stretches follow at residues Glu-35–Gln-60 and Met-225–Arg-277. Residues Arg-43–His-53 are compositionally biased toward polar residues.

Belongs to the universal ribosomal protein uL2 family. Part of the 50S ribosomal subunit. Forms a bridge to the 30S subunit in the 70S ribosome.

In terms of biological role, one of the primary rRNA binding proteins. Required for association of the 30S and 50S subunits to form the 70S ribosome, for tRNA binding and peptide bond formation. It has been suggested to have peptidyltransferase activity; this is somewhat controversial. Makes several contacts with the 16S rRNA in the 70S ribosome. This Methylobacillus flagellatus (strain ATCC 51484 / DSM 6875 / VKM B-1610 / KT) protein is Large ribosomal subunit protein uL2.